Consider the following 976-residue polypeptide: 3-hydroxy-3-methylglutaryl-coenzyme A reductase (976 aa).

Topologically, residues 1-36 (MDHEGCQGQHPQQCCQWVSNAWSEFLDLLKNAETLD) are lumenal. Residues 36 to 217 (DIVIMLLGYI…FTFYTAILSI (182 aa)) form the SSD domain. The chain crosses the membrane as a helical span at residues 37-57 (IVIMLLGYIAMHLTFVSLFLS). At 58 to 64 (MRKMGSK) the chain is on the cytoplasmic side. The chain crosses the membrane as a helical span at residues 65–85 (FWLGICTLFSSVFAFLFGLVV). The Lumenal portion of the chain corresponds to 86 to 90 (TTKLG). Residues 91–111 (VPISVILLSEGLPFLVVTIGF) traverse the membrane as a helical segment. The Cytoplasmic portion of the chain corresponds to 112–169 (EKNIVLTRAVMSHAIEHRRIQAQNSKSGKRSPDGSTQNMIQYAVQAAIKEKGFEIIRD). Residues 170 to 190 (YAIEIVILVIGAASGVQGGLQ) form a helical membrane-spanning segment. Over 191-193 (QFC) the chain is Lumenal. The chain crosses the membrane as a helical span at residues 194-214 (FLAAWTLFFDFILLFTFYTAI). Residues 215-272 (LSIKLRSTVSSVMSICVWPLRMMASRRVAENVAKGDDELNRVRGDAPLFGRKSSSIPK) are Cytoplasmic-facing. A helical membrane pass occupies residues 273-293 (FKVLMILGFIFVNIVNICSIP). Residues 294-401 (FRNPSSMSTI…GGILKSLEDP (108 aa)) are Lumenal-facing. A helical transmembrane segment spans residues 402 to 422 (VLSKWIVIALALSVALNGYLF). Residues 423–976 (NVARWGIKDP…RYSEVKAIDE (554 aa)) are Cytoplasmic-facing. The active-site Charge relay system is the glutamate 618. Residue 624-630 (SASRGCK) coordinates CoA. NADP(+)-binding positions include 685–687 (SRF) and 712–720 (DAMGMNMIS). The active-site Charge relay system is the lysine 752. Residue 781–783 (VLK) participates in CoA binding. Residue aspartate 828 is the Charge relay system of the active site. 923-924 (AH) is a binding site for CoA. Histidine 924 functions as the Proton donor in the catalytic mechanism. A disordered region spans residues 926–954 (QHNRSAAPSRSTTPGSSHDARLTGHDQCP). An NADP(+)-binding site is contributed by 928-929 (NR). Positions 928–941 (NRSAAPSRSTTPGS) are enriched in polar residues. A compositionally biased stretch (basic and acidic residues) spans 943–953 (HDARLTGHDQC).

This sequence belongs to the HMG-CoA reductase family.

It localises to the endoplasmic reticulum membrane. It carries out the reaction (R)-mevalonate + 2 NADP(+) + CoA = (3S)-3-hydroxy-3-methylglutaryl-CoA + 2 NADPH + 2 H(+). It participates in metabolic intermediate biosynthesis; (R)-mevalonate biosynthesis; (R)-mevalonate from acetyl-CoA: step 3/3. Its function is as follows. HMG-CoA reductase; part of the first module of ergosterol biosynthesis pathway that includes the early steps of the pathway, conserved across all eukaryotes, and which results in the formation of mevalonate from acetyl-coenzyme A (acetyl-CoA). In this module, the cytosolic acetyl-CoA acetyltransferase catalyzes the formation of acetoacetyl-CoA. The hydroxymethylglutaryl-CoA synthase then condenses acetyl-CoA with acetoacetyl-CoA to form HMG-CoA. The rate-limiting step of the early module is the reduction to mevalonate by the 3-hydroxy-3-methylglutaryl-coenzyme A (HMG-CoA) reductase HMGR. The polypeptide is 3-hydroxy-3-methylglutaryl-coenzyme A reductase (Fusarium fujikuroi (Bakanae and foot rot disease fungus)).